The primary structure comprises 261 residues: Mediator of RNA polymerase II transcription subunit 7 (261 aa).

Disordered regions lie at residues 1-56, 99-121, and 223-244; these read MADA…PTEL, GITQ…SEPS, and DVDA…VSEE. Over residues 23–46 the composition is skewed to basic and acidic residues; the sequence is FTPDNLKKLDEIKKNASKGEDGKP. Positions 234–244 are enriched in basic and acidic residues; it reads NDTKKPNVSEE.

The protein belongs to the Mediator complex subunit 7 family. As to quaternary structure, component of the Mediator complex.

Its subcellular location is the nucleus. Component of the Mediator complex, a coactivator involved in the regulated transcription of nearly all RNA polymerase II-dependent genes. Mediator functions as a bridge to convey information from gene-specific regulatory proteins to the basal RNA polymerase II transcription machinery. Mediator is recruited to promoters by direct interactions with regulatory proteins and serves as a scaffold for the assembly of a functional preinitiation complex with RNA polymerase II and the general transcription factors. This Aspergillus oryzae (strain ATCC 42149 / RIB 40) (Yellow koji mold) protein is Mediator of RNA polymerase II transcription subunit 7 (med7).